The chain runs to 600 residues: Proline--tRNA ligase (600 aa).

Belongs to the class-II aminoacyl-tRNA synthetase family. ProS type 1 subfamily. In terms of assembly, homodimer.

It is found in the cytoplasm. It carries out the reaction tRNA(Pro) + L-proline + ATP = L-prolyl-tRNA(Pro) + AMP + diphosphate. Catalyzes the attachment of proline to tRNA(Pro) in a two-step reaction: proline is first activated by ATP to form Pro-AMP and then transferred to the acceptor end of tRNA(Pro). As ProRS can inadvertently accommodate and process non-cognate amino acids such as alanine and cysteine, to avoid such errors it has two additional distinct editing activities against alanine. One activity is designated as 'pretransfer' editing and involves the tRNA(Pro)-independent hydrolysis of activated Ala-AMP. The other activity is designated 'posttransfer' editing and involves deacylation of mischarged Ala-tRNA(Pro). The misacylated Cys-tRNA(Pro) is not edited by ProRS. This chain is Proline--tRNA ligase, found in Synechococcus elongatus (strain ATCC 33912 / PCC 7942 / FACHB-805) (Anacystis nidulans R2).